We begin with the raw amino-acid sequence, 335 residues long: Probable UDP-N-acetylglucosamine pyrophosphorylase (335 aa).

Positions 45–48 (LSGG) match the Substrate binding motif. UTP is bound by residues 45 to 48 (LSGG), Lys59, Gln120, and Gly145. Asn146 lines the substrate pocket. Asp170 is a UTP binding site. The Substrate binding motif lies at 218-219 (EY). Position 278 (Lys278) interacts with UTP. Lys308 provides a ligand contact to substrate.

The protein belongs to the UDPGP type 1 family.

The protein resides in the cytoplasm. It carries out the reaction N-acetyl-alpha-D-glucosamine 1-phosphate + UTP + H(+) = UDP-N-acetyl-alpha-D-glucosamine + diphosphate. It functions in the pathway nucleotide-sugar biosynthesis; UDP-N-acetyl-alpha-D-glucosamine biosynthesis; UDP-N-acetyl-alpha-D-glucosamine from N-acetyl-alpha-D-glucosamine 1-phosphate: step 1/1. This chain is Probable UDP-N-acetylglucosamine pyrophosphorylase (UAP1), found in Encephalitozoon cuniculi (strain GB-M1) (Microsporidian parasite).